Reading from the N-terminus, the 142-residue chain is MKTFTAKPETVKRDWYVVDASGKTLGRLATELARRLRGKHKAEYTPHVDTGDYIIVLNAEKVAVTGNKRLDKKYFHHTGHIGGIKEATFEEMIARHPERVIEIAVKGMLPKGPLGRAMFRKLKVYAGNEHNHAAQQPQVLDI.

This sequence belongs to the universal ribosomal protein uL13 family. As to quaternary structure, part of the 50S ribosomal subunit.

This protein is one of the early assembly proteins of the 50S ribosomal subunit, although it is not seen to bind rRNA by itself. It is important during the early stages of 50S assembly. The protein is Large ribosomal subunit protein uL13 of Edwardsiella ictaluri (strain 93-146).